The sequence spans 361 residues: Holliday junction branch migration complex subunit RuvB (361 aa).

The tract at residues 1 to 181 (MKDQRLLDSV…FGIPIRLNFY (181 aa)) is large ATPase domain (RuvB-L). ATP contacts are provided by residues Leu20, Arg21, Gly62, Lys65, Thr66, Thr67, 128–130 (EDY), Arg171, Tyr181, and Arg218. Thr66 contacts Mg(2+). Residues 182–252 (TIEELEYIVQ…VADEALSRLE (71 aa)) form a small ATPAse domain (RuvB-S) region. Residues 255–361 (HLGLDPLDRR…QTTLWDEADE (107 aa)) form a head domain (RuvB-H) region. 3 residues coordinate DNA: Arg291, Arg310, and Arg315.

This sequence belongs to the RuvB family. Homohexamer. Forms an RuvA(8)-RuvB(12)-Holliday junction (HJ) complex. HJ DNA is sandwiched between 2 RuvA tetramers; dsDNA enters through RuvA and exits via RuvB. An RuvB hexamer assembles on each DNA strand where it exits the tetramer. Each RuvB hexamer is contacted by two RuvA subunits (via domain III) on 2 adjacent RuvB subunits; this complex drives branch migration. In the full resolvosome a probable DNA-RuvA(4)-RuvB(12)-RuvC(2) complex forms which resolves the HJ.

Its subcellular location is the cytoplasm. The catalysed reaction is ATP + H2O = ADP + phosphate + H(+). The RuvA-RuvB-RuvC complex processes Holliday junction (HJ) DNA during genetic recombination and DNA repair, while the RuvA-RuvB complex plays an important role in the rescue of blocked DNA replication forks via replication fork reversal (RFR). RuvA specifically binds to HJ cruciform DNA, conferring on it an open structure. The RuvB hexamer acts as an ATP-dependent pump, pulling dsDNA into and through the RuvAB complex. RuvB forms 2 homohexamers on either side of HJ DNA bound by 1 or 2 RuvA tetramers; 4 subunits per hexamer contact DNA at a time. Coordinated motions by a converter formed by DNA-disengaged RuvB subunits stimulates ATP hydrolysis and nucleotide exchange. Immobilization of the converter enables RuvB to convert the ATP-contained energy into a lever motion, pulling 2 nucleotides of DNA out of the RuvA tetramer per ATP hydrolyzed, thus driving DNA branch migration. The RuvB motors rotate together with the DNA substrate, which together with the progressing nucleotide cycle form the mechanistic basis for DNA recombination by continuous HJ branch migration. Branch migration allows RuvC to scan DNA until it finds its consensus sequence, where it cleaves and resolves cruciform DNA. The sequence is that of Holliday junction branch migration complex subunit RuvB from Bartonella quintana (strain Toulouse) (Rochalimaea quintana).